A 389-amino-acid chain; its full sequence is 23S rRNA (uracil(747)-C(5))-methyltransferase RlmC (389 aa).

[4Fe-4S] cluster-binding residues include Cys12, Cys20, Cys23, and Cys99. Residues Gln224, Phe253, Glu274, and Asn321 each contribute to the S-adenosyl-L-methionine site. Catalysis depends on Cys348, which acts as the Nucleophile.

Belongs to the class I-like SAM-binding methyltransferase superfamily. RNA M5U methyltransferase family. RlmC subfamily.

It catalyses the reaction uridine(747) in 23S rRNA + S-adenosyl-L-methionine = 5-methyluridine(747) in 23S rRNA + S-adenosyl-L-homocysteine + H(+). In terms of biological role, catalyzes the formation of 5-methyl-uridine at position 747 (m5U747) in 23S rRNA. This is 23S rRNA (uracil(747)-C(5))-methyltransferase RlmC from Shewanella sp. (strain W3-18-1).